Consider the following 485-residue polypeptide: PTS system arbutin-, cellobiose-, and salicin-specific EIIBC component (485 aa).

The region spanning 1 to 88 is the PTS EIIB type-1 domain; that stretch reads MAKNYAALAR…VSLLPGDMQP (88 aa). Catalysis depends on cysteine 28, which acts as the Phosphocysteine intermediate; for EIIB activity. 10 consecutive transmembrane segments (helical) span residues 102 to 122, 147 to 167, 177 to 197, 207 to 227, 254 to 274, 285 to 305, 330 to 350, 363 to 383, 389 to 409, and 433 to 453; these read IGAGILDALIGTMSPLIPAII, LTILNVIGDGAFFFLPLMVAA, MSLAIAIAGVLVHPSFIELMA, FALIPVTAVKYTYTVIPALVM, LIVLIAAPLAILLIGPIGIWI, IHGYLGWLSVAIMGALWPLLV, VMPSEIGANLSLGGSSLAVAW, AAAASAIMAGISEPALYGVAI, LIASLISGFICGAVAGMAGLA, and IVWVFAVMALAVVLSFILTLL. In terms of domain architecture, PTS EIIC type-1 spans 108 to 470; it reads DALIGTMSPL…VEEAAAQARK (363 aa).

The protein resides in the cell inner membrane. The phosphoenolpyruvate-dependent sugar phosphotransferase system (sugar PTS), a major carbohydrate active -transport system, catalyzes the phosphorylation of incoming sugar substrates concomitantly with their translocation across the cell membrane. This system is involved in arbutin, cellobiose, and salicin transport. This chain is PTS system arbutin-, cellobiose-, and salicin-specific EIIBC component (ascF), found in Escherichia coli (strain K12).